The following is a 1031-amino-acid chain: Error-prone DNA polymerase (1031 aa).

This sequence belongs to the DNA polymerase type-C family. DnaE2 subfamily.

It is found in the cytoplasm. The enzyme catalyses DNA(n) + a 2'-deoxyribonucleoside 5'-triphosphate = DNA(n+1) + diphosphate. In terms of biological role, DNA polymerase involved in damage-induced mutagenesis and translesion synthesis (TLS). It is not the major replicative DNA polymerase. The chain is Error-prone DNA polymerase from Pseudomonas syringae pv. tomato (strain ATCC BAA-871 / DC3000).